Reading from the N-terminus, the 136-residue chain is MLQPKRTKFRKVHKGRNRGLAQGTDVSFGTFGLKAVGRGRLTARQIEAARRAMTRAVKRQGKIWIRVFPDKPITEKPLEVRMGKGKGNVEYWVALIQPGKVLYEMDGVPEELAREAFKLAAAKLPIKTTFVTKTVM.

The protein belongs to the universal ribosomal protein uL16 family. In terms of assembly, part of the 50S ribosomal subunit.

Binds 23S rRNA and is also seen to make contacts with the A and possibly P site tRNAs. The polypeptide is Large ribosomal subunit protein uL16 (Erwinia tasmaniensis (strain DSM 17950 / CFBP 7177 / CIP 109463 / NCPPB 4357 / Et1/99)).